The sequence spans 279 residues: Phosphatidylglycerol--prolipoprotein diacylglyceryl transferase (279 aa).

The next 3 helical transmembrane spans lie at 18–38 (LSVR…YFVA), 55–75 (IIFY…VIFQ), and 89–109 (IWHG…AGVI). A 1,2-diacyl-sn-glycero-3-phospho-(1'-sn-glycerol) is bound at residue Arg137. The next 2 helical transmembrane spans lie at 203–223 (LGET…FIEG) and 235–255 (IRVA…LIVY).

It belongs to the Lgt family.

The protein resides in the cell membrane. The enzyme catalyses L-cysteinyl-[prolipoprotein] + a 1,2-diacyl-sn-glycero-3-phospho-(1'-sn-glycerol) = an S-1,2-diacyl-sn-glyceryl-L-cysteinyl-[prolipoprotein] + sn-glycerol 1-phosphate + H(+). It functions in the pathway protein modification; lipoprotein biosynthesis (diacylglyceryl transfer). In terms of biological role, catalyzes the transfer of the diacylglyceryl group from phosphatidylglycerol to the sulfhydryl group of the N-terminal cysteine of a prolipoprotein, the first step in the formation of mature lipoproteins. The polypeptide is Phosphatidylglycerol--prolipoprotein diacylglyceryl transferase (Staphylococcus aureus (strain USA300)).